Consider the following 578-residue polypeptide: Proline--tRNA ligase (578 aa).

It belongs to the class-II aminoacyl-tRNA synthetase family. ProS type 1 subfamily. Homodimer.

The protein localises to the cytoplasm. The enzyme catalyses tRNA(Pro) + L-proline + ATP = L-prolyl-tRNA(Pro) + AMP + diphosphate. Its function is as follows. Catalyzes the attachment of proline to tRNA(Pro) in a two-step reaction: proline is first activated by ATP to form Pro-AMP and then transferred to the acceptor end of tRNA(Pro). As ProRS can inadvertently accommodate and process non-cognate amino acids such as alanine and cysteine, to avoid such errors it has two additional distinct editing activities against alanine. One activity is designated as 'pretransfer' editing and involves the tRNA(Pro)-independent hydrolysis of activated Ala-AMP. The other activity is designated 'posttransfer' editing and involves deacylation of mischarged Ala-tRNA(Pro). The misacylated Cys-tRNA(Pro) is not edited by ProRS. This Paraburkholderia phymatum (strain DSM 17167 / CIP 108236 / LMG 21445 / STM815) (Burkholderia phymatum) protein is Proline--tRNA ligase.